The primary structure comprises 156 residues: Transcription elongation factor GreA (156 aa).

Positions 2 to 27 form a coiled coil; the sequence is EKTFPMTKEGLDKLKAELENLKLVKR.

It belongs to the GreA/GreB family.

In terms of biological role, necessary for efficient RNA polymerase transcription elongation past template-encoded arresting sites. The arresting sites in DNA have the property of trapping a certain fraction of elongating RNA polymerases that pass through, resulting in locked ternary complexes. Cleavage of the nascent transcript by cleavage factors such as GreA or GreB allows the resumption of elongation from the new 3'terminus. GreA releases sequences of 2 to 3 nucleotides. The protein is Transcription elongation factor GreA of Lactococcus lactis subsp. cremoris (strain SK11).